Consider the following 154-residue polypeptide: Myoglobin (154 aa).

The Globin domain maps to 2 to 148 (VLTDAEWHLV…FRKDIAAKYK (147 aa)). His65 provides a ligand contact to nitrite. O2 is bound at residue His65. Position 68 is a phosphothreonine (Thr68). Heme b is bound at residue His94.

It belongs to the globin family. As to quaternary structure, monomeric.

It localises to the cytoplasm. The protein localises to the sarcoplasm. It carries out the reaction Fe(III)-heme b-[protein] + nitric oxide + H2O = Fe(II)-heme b-[protein] + nitrite + 2 H(+). The enzyme catalyses H2O2 + AH2 = A + 2 H2O. Functionally, monomeric heme protein which primary function is to store oxygen and facilitate its diffusion within muscle tissues. Reversibly binds oxygen through a pentacoordinated heme iron and enables its timely and efficient release as needed during periods of heightened demand. Depending on the oxidative conditions of tissues and cells, and in addition to its ability to bind oxygen, it also has a nitrite reductase activity whereby it regulates the production of bioactive nitric oxide. Under stress conditions, like hypoxia and anoxia, it also protects cells against reactive oxygen species thanks to its pseudoperoxidase activity. The protein is Myoglobin (MB) of Balaenoptera physalus (Fin whale).